We begin with the raw amino-acid sequence, 159 residues long: Galactose-specific lectin nattectin (159 aa).

The signal sequence occupies residues 1-21 (MASVPHFTVFLFLACALGIGA). Residues 22-24 (NVT) constitute a propeptide that is removed on maturation. Cystine bridges form between cysteine 31–cysteine 42, cysteine 59–cysteine 155, and cysteine 132–cysteine 147. In terms of domain architecture, C-type lectin spans 38–156 (HGSRCFTFHR…CKVKRSFLCA (119 aa)). Ca(2+)-binding residues include glutamine 122, aspartate 124, glutamate 130, and asparagine 143. A Galactose-binding motif is present at residues 122-124 (QPD).

As to quaternary structure, monomer. Not glycosylated. As to expression, expressed by the venom gland.

Its subcellular location is the secreted. In terms of biological role, galactose specific lectin that exhibits hemagglutination activity (minimum hemagluttination concentration = 2.5 ug/well) in a calcium-independent fashion. Has remarkable pro-inflammatory activity, inducing neutrophil mobilization in mice. Plays a crucial role in the innate immune system and chronic manifestations, especially in neutrophil mobilization. This is Galactose-specific lectin nattectin from Thalassophryne nattereri (Copper Joe toadfish).